The following is a 438-amino-acid chain: GDP-mannose 6-dehydrogenase (438 aa).

Tyr10, Val11, Asp30, Lys35, Thr86, and Thr124 together coordinate NAD(+). GDP-alpha-D-mannuronate contacts are provided by Glu161, Lys210, Asn214, His217, Asn225, Tyr256, Tyr257, Arg259, Phe262, and Gly265. Residue Cys268 is part of the active site. Lys271 is a binding site for NAD(+). Lys324 is a GDP-alpha-D-mannuronate binding site. Arg331 is an NAD(+) binding site.

It belongs to the UDP-glucose/GDP-mannose dehydrogenase family.

It catalyses the reaction GDP-alpha-D-mannose + 2 NAD(+) + H2O = GDP-alpha-D-mannuronate + 2 NADH + 3 H(+). It participates in glycan biosynthesis; alginate biosynthesis. Catalyzes the oxidation of guanosine diphospho-D-mannose (GDP-D-mannose) to GDP-D-mannuronic acid, a precursor for alginate polymerization. The alginate layer causes a mucoid phenotype and provides a protective barrier against host immune defenses and antibiotics. The sequence is that of GDP-mannose 6-dehydrogenase (algD) from Pseudomonas syringae pv. tomato (strain ATCC BAA-871 / DC3000).